Reading from the N-terminus, the 417-residue chain is NADH-quinone oxidoreductase subunit D (417 aa).

Belongs to the complex I 49 kDa subunit family. In terms of assembly, NDH-1 is composed of 14 different subunits. Subunits NuoB, C, D, E, F, and G constitute the peripheral sector of the complex.

The protein resides in the cell inner membrane. The catalysed reaction is a quinone + NADH + 5 H(+)(in) = a quinol + NAD(+) + 4 H(+)(out). In terms of biological role, NDH-1 shuttles electrons from NADH, via FMN and iron-sulfur (Fe-S) centers, to quinones in the respiratory chain. The immediate electron acceptor for the enzyme in this species is believed to be ubiquinone. Couples the redox reaction to proton translocation (for every two electrons transferred, four hydrogen ions are translocated across the cytoplasmic membrane), and thus conserves the redox energy in a proton gradient. This Paraburkholderia phymatum (strain DSM 17167 / CIP 108236 / LMG 21445 / STM815) (Burkholderia phymatum) protein is NADH-quinone oxidoreductase subunit D.